The sequence spans 357 residues: Protein-L-isoaspartate O-methyltransferase domain-containing protein 1 (357 aa).

A lipid anchor (N-myristoyl glycine) is attached at Gly2. Residue Ser64 is part of the active site. AdoMet binding motif regions lie at residues 85–94, 160–164, and 181–191; these read LNLGSGTGYL, YDRIY, and LKVGGILVMPI. The BC-box stretch occupies residues 240-250; that stretch reads VRNLQDLARIY. Residues 299–331 form a disordered region; sequence PLDSEEDEKMEEDSKEEEEKEHIEAMKREEPPQ. The segment covering 301 to 317 has biased composition (acidic residues); the sequence is DSEEDEKMEEDSKEEEE. Positions 318 to 331 are enriched in basic and acidic residues; that stretch reads KEHIEAMKREEPPQ. The tract at residues 341-344 is CUL-box; sequence LPLP.

It belongs to the methyltransferase superfamily. L-isoaspartyl/D-aspartyl protein methyltransferase family. As to quaternary structure, component of the probable ECS(PCMTD1) E3 ubiquitin-protein ligase complex, at least composed of CUL5, ELOB, ELOC, RBX2 and PCMTD1. Interacts (via the BC-box) with ELOB and ELOC; the interaction is direct and stabilizes PCMTD1.

It is found in the cytoplasm. Its subcellular location is the membrane. Functionally, substrate recognition component of an ECS (Elongin BC-CUL5-SOCS-box protein) E3 ubiquitin ligase complex which mediates the ubiquitination and subsequent proteasomal degradation of target proteins. Specifically binds to the methyltransferase cofactor S-adenosylmethionine (AdoMet) via the N-terminal AdoMet binding motif, but does not display methyltransferase activity. May provide an alternate maintenance pathway for modified proteins by acting as a damage-specific E3 ubiquitin ligase adaptor protein. The sequence is that of Protein-L-isoaspartate O-methyltransferase domain-containing protein 1 (Pcmtd1) from Mus musculus (Mouse).